Reading from the N-terminus, the 590-residue chain is Histone-binding protein N1/N2 (590 aa).

The disordered stretch occupies residues 1–30; it reads MAEETAALSTEKTEDTSTAPSTSAEKADGI. A TPR 1 repeat occupies 36-69; that stretch reads AKRLMGAGQKHLVMKDVRSAVNLFQEASSLLAKQ. The interval 102–328 is disordered; that stretch reads ALEGMPEDDE…EKETEEEDVG (227 aa). Acidic residues predominate over residues 106–120; sequence MPEDDEEEAEKEEDP. 2 stretches are compositionally biased toward basic and acidic residues: residues 128–250 and 262–275; these read LDEK…DAKE and AEEKMDSEASESKE. A compositionally biased stretch (acidic residues) spans 293–327; the sequence is EKMEEEEEGEDSEENEDGTEENEGTEEKETEEEDV. TPR repeat units lie at residues 357-390 and 399-432; these read AQAHQKLGEVCIESENYSQAVEDFLACLNIQKEH and AETHYHLGLAYQYSSKHEEAISHFTQSIGVIEKR. Positions 492 to 590 are disordered; sequence GGSSGFSKEN…METATVESTA (99 aa). The span at 496–525 shows a compositional bias: polar residues; it reads GFSKENGSTSSSSAVEKSGDSTVPVTNCVS. Positions 531 to 537 match the Nuclear localization signal motif; that stretch reads VRKKRKT. Residues 536–553 show a composition bias toward basic and acidic residues; the sequence is KTEEESPLKDKDAKKSKQ.

The protein belongs to the NASP family.

Its subcellular location is the nucleus. In terms of biological role, this protein is involved in nucleosome assembly. It is bound to H3 and H4 in the absence of DNA, but released from H3 and H4 in the presence of DNA. This Xenopus laevis (African clawed frog) protein is Histone-binding protein N1/N2.